A 182-amino-acid chain; its full sequence is NADH-quinone oxidoreductase subunit I (182 aa).

4Fe-4S ferredoxin-type domains follow at residues 52–82 (LTRD…LQKA) and 92–121 (DFFR…LTPD). [4Fe-4S] cluster is bound by residues Cys-62, Cys-65, Cys-68, Cys-72, Cys-101, Cys-104, Cys-107, and Cys-111.

This sequence belongs to the complex I 23 kDa subunit family. As to quaternary structure, NDH-1 is composed of 13 different subunits. Subunits NuoA, H, J, K, L, M, N constitute the membrane sector of the complex. [4Fe-4S] cluster is required as a cofactor.

It localises to the cell inner membrane. It catalyses the reaction a quinone + NADH + 5 H(+)(in) = a quinol + NAD(+) + 4 H(+)(out). Its function is as follows. NDH-1 shuttles electrons from NADH, via FMN and iron-sulfur (Fe-S) centers, to quinones in the respiratory chain. The immediate electron acceptor for the enzyme in this species is believed to be ubiquinone. Couples the redox reaction to proton translocation (for every two electrons transferred, four hydrogen ions are translocated across the cytoplasmic membrane), and thus conserves the redox energy in a proton gradient. The sequence is that of NADH-quinone oxidoreductase subunit I from Pseudomonas fluorescens (strain ATCC BAA-477 / NRRL B-23932 / Pf-5).